We begin with the raw amino-acid sequence, 284 residues long: Tropomyosin-1 (284 aa).

Positions 1–284 (MDGIKKKMIA…DQTFAELTGY (284 aa)) form a coiled coil. A disordered region spans residues 111–131 (TKLEEASKTAEESERGRKDLE).

The protein belongs to the tropomyosin family. Homodimer.

In terms of biological role, tropomyosin, in association with the troponin complex, plays a central role in the calcium dependent regulation of muscle contraction. The protein is Tropomyosin-1 of Schistosoma mansoni (Blood fluke).